A 669-amino-acid polypeptide reads, in one-letter code: DNA ligase 2 (669 aa).

NAD(+) contacts are provided by residues 35–39 (DKEYD) and 83–84 (SL). The active-site N6-AMP-lysine intermediate is the Lys125. Residues Arg147, Glu181, and Lys317 each coordinate NAD(+). Cys410, Cys413, Cys426, and Cys432 together coordinate Zn(2+). Residues 590-669 (VVENAFTGKT…EEFEQLINNM (80 aa)) enclose the BRCT domain.

It belongs to the NAD-dependent DNA ligase family. LigA subfamily. It depends on Mg(2+) as a cofactor. Requires Mn(2+) as cofactor.

It carries out the reaction NAD(+) + (deoxyribonucleotide)n-3'-hydroxyl + 5'-phospho-(deoxyribonucleotide)m = (deoxyribonucleotide)n+m + AMP + beta-nicotinamide D-nucleotide.. In terms of biological role, DNA ligase that catalyzes the formation of phosphodiester linkages between 5'-phosphoryl and 3'-hydroxyl groups in double-stranded DNA using NAD as a coenzyme and as the energy source for the reaction. It is essential for DNA replication and repair of damaged DNA. This is DNA ligase 2 from Clostridium acetobutylicum (strain ATCC 824 / DSM 792 / JCM 1419 / IAM 19013 / LMG 5710 / NBRC 13948 / NRRL B-527 / VKM B-1787 / 2291 / W).